The chain runs to 325 residues: LIM and senescent cell antigen-like-containing domain protein 1 (325 aa).

Residue alanine 2 is modified to N-acetylalanine. 5 LIM zinc-binding domains span residues 10–62 (CERC…CEHD), 71–121 (CHQC…CRPC), 135–184 (CQKC…CLPC), 193–243 (CGAC…CETH), and 252–303 (CFHC…CKKC).

As to quaternary structure, component of the heterotrimeric IPP (ILK-PINCH-PARVIN) complex composed of ILK, LIMS1/PINCH and PARVA; the complex binds to F-actin via the C-terminal tail of LIMS1 and the N-terminal region of PARVA, promoting F-actin filament bundling. Formation of the IPP complex is dependent on protein kinase C and precedes integrin-mediated cell adhesion and spreading. Competes with LIMS2 for interaction with ILK. Interacts (via LIM zinc-binding 5) with TGFB1I1. Interacts with SH3/SH2 adapter NCK2, thereby linking the complex to cell surface receptors. In terms of tissue distribution, expressed in most tissues except in the brain.

It is found in the cell junction. Its subcellular location is the focal adhesion. It localises to the cell membrane. In terms of biological role, within the IPP (ILK-PINCH-PARVIN) complex, binds to F-actin, promoting F-actin bundling, a process required to generate force for actin cytoskeleton reorganization and subsequent dynamic cell adhesion events such as cell spreading and migration. This chain is LIM and senescent cell antigen-like-containing domain protein 1 (LIMS1), found in Homo sapiens (Human).